Reading from the N-terminus, the 602-residue chain is Trichothecene efflux pump TRI12 (602 aa).

4 helical membrane passes run 49–69, 77–97, 107–127, and 134–154; these read LTLL…SFII, NVSL…LLMG, GFIL…LYSF, and IGAQ…ILFI. Residue N160 is glycosylated (N-linked (GlcNAc...) asparagine). 11 consecutive transmembrane segments (helical) span residues 164–184, 196–216, 240–260, 271–291, 297–317, 355–375, 380–400, 408–428, 450–470, 484–504, and 532–552; these read FLGN…GPYI, WIFY…FIFY, WIGA…VSWG, ILGL…YECY, PIIP…MLLI, STAG…FHIF, WQLI…ASVN, IAFS…TMLL, AICG…KFPG, WGFP…LTGQ, and AAAY…AIIA. N-linked (GlcNAc...) asparagine glycosylation is present at N590.

Belongs to the major facilitator superfamily.

The protein resides in the cell membrane. Efflux pump that provides the dual role of trichothecene export and self-protection by allowing the fungus to evade the harmful effect of its own trichothecene production. In Trichoderma arundinaceum, this protein is Trichothecene efflux pump TRI12.